Here is a 417-residue protein sequence, read N- to C-terminus: Actin-like protein 7B (417 aa).

The disordered stretch occupies residues Met-1–Gln-39. Position 8 is a phosphoserine (Ser-8).

Belongs to the actin family.

Its subcellular location is the cytoplasm. The protein resides in the cytoskeleton. The sequence is that of Actin-like protein 7B (Actl7b) from Rattus norvegicus (Rat).